Consider the following 146-residue polypeptide: MNPAHLLILAAVCVSPLGASSNRPMPLNLYQFKNMIQCTVPNRSWWDFADYGCYCGRGGSGTPVDDLDRCCQVHDNCYGEAEKISRCWPYFKTYSYECSQGTLTCKGGNDACAAAVCDCDRLAAICFAGAPYNDNNYNIDLKARCQ.

The first 21 residues, 1 to 21, serve as a signal peptide directing secretion; it reads MNPAHLLILAAVCVSPLGASS. Residues 22–27 constitute a propeptide that is removed on maturation; it reads NRPMPL. 7 disulfide bridges follow: cysteine 38-cysteine 98, cysteine 53-cysteine 145, cysteine 55-cysteine 71, cysteine 70-cysteine 126, cysteine 77-cysteine 119, cysteine 87-cysteine 112, and cysteine 105-cysteine 117. The Ca(2+) site is built by tyrosine 54, glycine 56, and glycine 58. Histidine 74 is an active-site residue. Residue aspartate 75 participates in Ca(2+) binding. Residue aspartate 120 is part of the active site.

It belongs to the phospholipase A2 family. Group I subfamily. D49 sub-subfamily. Requires Ca(2+) as cofactor. Expressed by the venom gland.

The protein localises to the secreted. The enzyme catalyses a 1,2-diacyl-sn-glycero-3-phosphocholine + H2O = a 1-acyl-sn-glycero-3-phosphocholine + a fatty acid + H(+). Functionally, PLA2 catalyzes the calcium-dependent hydrolysis of the 2-acyl groups in 3-sn-phosphoglycerides. The sequence is that of Acidic phospholipase A2 D from Naja sputatrix (Malayan spitting cobra).